A 174-amino-acid chain; its full sequence is Large ribosomal subunit protein uL10 (174 aa).

Belongs to the universal ribosomal protein uL10 family. In terms of assembly, part of the ribosomal stalk of the 50S ribosomal subunit. The N-terminus interacts with L11 and the large rRNA to form the base of the stalk. The C-terminus forms an elongated spine to which L12 dimers bind in a sequential fashion forming a multimeric L10(L12)X complex.

Forms part of the ribosomal stalk, playing a central role in the interaction of the ribosome with GTP-bound translation factors. This chain is Large ribosomal subunit protein uL10, found in Verminephrobacter eiseniae (strain EF01-2).